A 175-amino-acid polypeptide reads, in one-letter code: Translation initiation factor IF-3 (175 aa).

This sequence belongs to the IF-3 family. Monomer.

The protein resides in the cytoplasm. In terms of biological role, IF-3 binds to the 30S ribosomal subunit and shifts the equilibrium between 70S ribosomes and their 50S and 30S subunits in favor of the free subunits, thus enhancing the availability of 30S subunits on which protein synthesis initiation begins. This is Translation initiation factor IF-3 from Staphylococcus aureus (strain NCTC 8325 / PS 47).